The sequence spans 458 residues: Probable M18 family aminopeptidase 1 (458 aa).

Zn(2+)-binding residues include His-95, His-170, and His-434.

The protein belongs to the peptidase M18 family. It depends on Zn(2+) as a cofactor.

The protein is Probable M18 family aminopeptidase 1 of Borrelia garinii subsp. bavariensis (strain ATCC BAA-2496 / DSM 23469 / PBi) (Borreliella bavariensis).